A 120-amino-acid polypeptide reads, in one-letter code: Ribosome-binding factor A (120 aa).

The protein belongs to the RbfA family. In terms of assembly, monomer. Binds 30S ribosomal subunits, but not 50S ribosomal subunits or 70S ribosomes.

The protein resides in the cytoplasm. One of several proteins that assist in the late maturation steps of the functional core of the 30S ribosomal subunit. Associates with free 30S ribosomal subunits (but not with 30S subunits that are part of 70S ribosomes or polysomes). Required for efficient processing of 16S rRNA. May interact with the 5'-terminal helix region of 16S rRNA. The sequence is that of Ribosome-binding factor A from Lactobacillus delbrueckii subsp. bulgaricus (strain ATCC 11842 / DSM 20081 / BCRC 10696 / JCM 1002 / NBRC 13953 / NCIMB 11778 / NCTC 12712 / WDCM 00102 / Lb 14).